The following is a 314-amino-acid chain: MALAARLWRLLPFRRGAAPGSRLPAGTSGSRGHCGPCRFRGFEVMGNPGTFKRGLLLSALSYLGFETYQVISQAAVVHATAKVEEILEQADYLYESGETEKLYQLLTQYKESEDAELLWRLARASRDVAQLSRTSEEEKKLLVYEALEYAKRALEKNESSFASHKWYAICLSDVGDYEGIKAKIANAYIIKEHFEKAIELNPKDATSIHLMGIWCYTFAEMPWYQRRIAKMLFATPPSSTYEKALGYFHRAEQVDPNFYSKNLLLLGKTYLKLHNKKLAAFWLMKAKDYPAHTEEDKQIQTEAAQLLTSFSEKN.

Residue Lys-165 is modified to N6-succinyllysine. TPR repeat units lie at residues Ala-168–Asp-204 and Pro-222–Phe-258.

The protein belongs to the RMDN family. Interacts with microtubules.

Its subcellular location is the cytoplasm. It localises to the cytoskeleton. It is found in the spindle. The protein resides in the spindle pole. This Homo sapiens (Human) protein is Regulator of microtubule dynamics protein 1 (RMDN1).